Consider the following 469-residue polypeptide: Calcium-binding mitochondrial carrier protein SCaMC-2-A (469 aa).

At 1 to 189 (MLCLCLYVPV…EHLTGMWWRH (189 aa)) the chain is on the mitochondrial intermembrane side. EF-hand domains follow at residues 47 to 80 (TYRR…QDHE), 78 to 113 (DHEK…LGVH), and 114 to 149 (ISLK…QPAE). The Ca(2+) site is built by Asp64, Gln66, and Glu71. Solcar repeat units follow at residues 184-270 (GMWW…IKRV), 278-363 (LGIS…LKNT), and 375-463 (PGVF…IKST). A helical transmembrane segment spans residues 190-207 (LVSGGGAGAVSRTCTAPL). Residues 208–244 (DRLKVLMQVHGCQGKSMCLMSGLTQMIKEGGVRSLWR) lie on the Mitochondrial matrix side of the membrane. A helical membrane pass occupies residues 245-264 (GNGINVIKIAPETALKFMAY). Topologically, residues 265–287 (EQIKRVMGSSQETLGISERFVAG) are mitochondrial intermembrane. The chain crosses the membrane as a helical span at residues 288-301 (SLAGVIAQSTIYPM). The Mitochondrial matrix segment spans residues 302 to 337 (EVLKTRLALRKTGQYKGISDCAKHILKTEGMSAFYK). Residues 338-357 (GYVPNMLGIIPYAGIDLAVY) traverse the membrane as a helical segment. Topologically, residues 358–380 (ETLKNTWLQRYGTENADPGVFVL) are mitochondrial intermembrane. The chain crosses the membrane as a helical span at residues 381–398 (LACGTVSSTCGQLASYPL). The Mitochondrial matrix portion of the chain corresponds to 399–437 (ALIRTRMQAQASVEGSSQVSMTGLFKQIMKTEGPTGLYR). A helical transmembrane segment spans residues 438–457 (GLTPNFLKVIPAVSISYVVY). Over 458–469 (EHIKSTLGVRSR) the chain is Mitochondrial intermembrane.

It belongs to the mitochondrial carrier (TC 2.A.29) family.

It is found in the mitochondrion inner membrane. Functionally, calcium-dependent mitochondrial solute carrier. The polypeptide is Calcium-binding mitochondrial carrier protein SCaMC-2-A (slc25a25a) (Danio rerio (Zebrafish)).